The chain runs to 446 residues: Probable glycine dehydrogenase (decarboxylating) subunit 1 (446 aa).

It belongs to the GcvP family. N-terminal subunit subfamily. The glycine cleavage system is composed of four proteins: P, T, L and H. In this organism, the P 'protein' is a heterodimer of two subunits.

It carries out the reaction N(6)-[(R)-lipoyl]-L-lysyl-[glycine-cleavage complex H protein] + glycine + H(+) = N(6)-[(R)-S(8)-aminomethyldihydrolipoyl]-L-lysyl-[glycine-cleavage complex H protein] + CO2. In terms of biological role, the glycine cleavage system catalyzes the degradation of glycine. The P protein binds the alpha-amino group of glycine through its pyridoxal phosphate cofactor; CO(2) is released and the remaining methylamine moiety is then transferred to the lipoamide cofactor of the H protein. This Methylocella silvestris (strain DSM 15510 / CIP 108128 / LMG 27833 / NCIMB 13906 / BL2) protein is Probable glycine dehydrogenase (decarboxylating) subunit 1.